The primary structure comprises 802 residues: MTIRSLNLFIIDKKHQHKSSLSSFQNCKLGIDASFYLTQIIHSFTPQELQSLAVNGESEYLQHRISEFLEQLRTENITPIFVFNGIPLTFEASSQLEVPGKQKSHSALTDFEAFDPYDANIQRNMYRMDASGPANYGESKPTLLYTNQRDHLDRLCDQVKFYLDQCNVEYFVAPYLAMAQLAYFLNGTSSPYIDAIYGSTDLLLFGVKKFITSMNTSSNVKISSDPSSPSTQTTINSAAKSSFTWLDGNALLQDTNGLSWQQFIDSCLLCGTAISPTFPQIEGTFLIKSAMELVRMFGSAYRAVLHFAEIFPQPIFQDYLQQYKRAVCFSKFGIVMDTKGLTLPPVPTESVPNDINIYFGTRLPNEIYFYISRGLIPCKMIGALVSGCFSDPVSILEQHIGDKASQGTFSGANSGLNPGRDNAAAVAAVDQRRFVDDLEEIWSQGLNLLTQPLNRFYQARDIVSLHGHNQQASLKVMHSYDPPLYNDTRAWMIYEENLPSYLSSNFLKEEPVVLFDLLRALNDPVFVKKSFCTEGNIGIKNPPKHPLSSTAEIVLSSCYRFLQIRSFVLTSHQLTSWGCPLLKALENCHLQNQTSVVVLFELLRLRQLKEPSLLSSSSASIADLSITSATEFLAKVATFLPIKQRPEVSKISIVDENLLQFYQLQTSFGSNLKELMAMILASVILNRNVDKSKIDPKLIRKTLPFQNINGSLVSGFVVKRFFEIISKEQEASSQQENIQKAYEIIEKEFPTIGSAENHIAQFLEFWKTFMEGVKEAENTSAIGKLVLSKLFLTNQWIFSLGL.

Phosphoserine is present on residues Ser-227, Ser-228, and Ser-230.

The protein belongs to the XPG/RAD2 endonuclease family. Interacts with pab1 binding protein ath1.

Involved in post-transcriptional regulation of gene expression by 3'-UTR-mediated RNA regulation. Promotes interactions between mRNA and poly(A)-binding protein. Binds the 3' UTR of mRNAs, centromeric transcripts and antisense-rDNA. Required for the establishment but not the maintenance of heterochromatin at pericentromeres, and for the maintenance of small domains of facultative heterochromatin known as HOODs. The chain is Post-transcriptional regulator mkt1 from Schizosaccharomyces pombe (strain 972 / ATCC 24843) (Fission yeast).